Consider the following 308-residue polypeptide: MESTYIFGHKSPDTDAINSAIIMAEFEKLNGNDSAKAYRLGKVNPETQYALDYFKAEAPELLTEDLTDKDVILVDHNEFQQSADTIESAKIRHVVDHHRIANFHTAAPLYYRAEPLGCTATILYKMFKEQGFEIKPQIASLMLSAIISDSLLFKSPTCTEQDKAAAQALENIAGVDAQEYGLEMLKAGASTVDKSPVEIINADAKTFNMGDYSVRIGQVNTVDVNEILARQAELEQAITETLSGAEYDIFVLVATDILNSDSTILVLGKDKDKIAKAFDVELDNNTAFLPGVVSRKKQIVPPITAALS.

Mn(2+) contacts are provided by histidine 9, aspartate 13, aspartate 15, aspartate 75, histidine 97, and aspartate 149.

It belongs to the PPase class C family. Mn(2+) serves as cofactor.

It is found in the cytoplasm. The enzyme catalyses diphosphate + H2O = 2 phosphate + H(+). The polypeptide is Probable manganese-dependent inorganic pyrophosphatase (Staphylococcus carnosus (strain TM300)).